The primary structure comprises 475 residues: Ankyrin repeat, SAM and basic leucine zipper domain-containing protein 1 (475 aa).

The interval 1 to 25 (MAASALRGLPVAGGGESSESEDDGW) is disordered. Phosphoserine occurs at positions 17, 18, and 20. ANK repeat units follow at residues 45–74 (EKKEKFKKAMTIGDVSLVQELLDSGISVDS), 78–107 (YGWTPLMYAASVANAELVRVLLDRGANASF), 110–144 (DKQSILITACSAHGSEEQILKCVELLLSRNADPNV), 148–177 (RLMTPIMYAARDGHTQVVALLVAHGAEVNT), 181–210 (NGYTALTWAARQGHKNIVLKLLELGANKML), and 214–243 (DGKMPSEIAKRNKHHEIFNLLSFTLNPLEG). The SAM domain maps to 272–334 (SYTAFGDLEV…KILAALKELQ (63 aa)).

In terms of assembly, interacts with DDX4, PIWIL1, RANBP9 and TDRD1. As to expression, expressed exclusively in the testis and ovary and at higher levels in the adult testis compared with the adult ovary.

It is found in the cytoplasm. Plays a central role during spermatogenesis by repressing transposable elements and preventing their mobilization, which is essential for the germline integrity. Acts via the piRNA metabolic process, which mediates the repression of transposable elements during meiosis by forming complexes composed of piRNAs and Piwi proteins and governs the methylation and subsequent repression of transposons. Its association with pi-bodies suggests a participation in the primary piRNAs metabolic process. Required prior to the pachytene stage to facilitate the production of multiple types of piRNAs, including those associated with repeats involved in the regulation of retrotransposons. May act by mediating protein-protein interactions during germ cell maturation. This Homo sapiens (Human) protein is Ankyrin repeat, SAM and basic leucine zipper domain-containing protein 1.